A 577-amino-acid polypeptide reads, in one-letter code: Sensor protein ChvG (577 aa).

Residues 1–29 are Cytoplasmic-facing; that stretch reads MRGQRRWAHPFTLIRRLFGNAVFSSLTRR. A helical membrane pass occupies residues 30-50; that stretch reads IVFFNLVALVVLVGGIMYLNQ. Topologically, residues 51–260 are periplasmic; it reads FREGLIDARV…DIDKIVHAER (210 aa). Residues 261–281 traverse the membrane as a helical segment; the sequence is LAIIRVFGVAALVNVILSLLL. Residues 282 to 577 are Cytoplasmic-facing; it reads SSTIANPLRR…VLSLPAGPHP (296 aa). The 57-residue stretch at 283 to 339 folds into the HAMP domain; it reads STIANPLRRLSAAAIRVRRGGAKEREEIPDFSSRQDEIGNLSVALREMTTALYDRIA. Positions 347–575 constitute a Histidine kinase domain; it reads DVSHELKNPL…RFVLSLPAGP (229 aa). His-350 carries the post-translational modification Phosphohistidine.

Homodimer.

The protein localises to the cell inner membrane. It carries out the reaction ATP + protein L-histidine = ADP + protein N-phospho-L-histidine.. The protein operates within glycan metabolism; exopolysaccharide biosynthesis. Member of a two-component regulatory system ChvG(ExoS)/ChvI involved in regulating the production of succinoglycan. Activates ChvI by phosphorylation. The chain is Sensor protein ChvG (chvG) from Rhizobium meliloti (strain 1021) (Ensifer meliloti).